The primary structure comprises 284 residues: Release factor glutamine methyltransferase (284 aa).

S-adenosyl-L-methionine-binding positions include 125 to 129 (GVGSG), E148, and N190. 190 to 193 (NPPY) provides a ligand contact to substrate.

Belongs to the protein N5-glutamine methyltransferase family. PrmC subfamily.

It catalyses the reaction L-glutaminyl-[peptide chain release factor] + S-adenosyl-L-methionine = N(5)-methyl-L-glutaminyl-[peptide chain release factor] + S-adenosyl-L-homocysteine + H(+). Its function is as follows. Methylates the class 1 translation termination release factors RF1/PrfA and RF2/PrfB on the glutamine residue of the universally conserved GGQ motif. The protein is Release factor glutamine methyltransferase of Geobacter sulfurreducens (strain ATCC 51573 / DSM 12127 / PCA).